Reading from the N-terminus, the 258-residue chain is MIPLQKDNQEEGVCPICQESLKEAVSTNCGHLFCRVCLTQHVEKASASGVFCCPLCRKPCSEEVLGTGYICPNHQKRVCRFCEESRLLLCVECLVSPEHMSHHELTIENALSHYKERLNRRSRKLRKDIAELQRLKAQQEKKLQALQFQVDHGNHRLEAGPESQHQTREQLGALPQQWLGQLEHMPAEAARILDISRAVTQLRSLVIDLERTAKELDTNTLKNAGDLLNRSAPQKLEVIYPQLEKGVSELLLQPPQKL.

The RING-type zinc-finger motif lies at 14 to 56 (CPICQESLKEAVSTNCGHLFCRVCLTQHVEKASASGVFCCPLC). The segment at 66-107 (GTGYICPNHQKRVCRFCEESRLLLCVECLVSPEHMSHHELTI) adopts a B box-type zinc-finger fold. Zn(2+) is bound by residues Cys71, His74, Cys93, and His99. Residues 107–159 (IENALSHYKERLNRRSRKLRKDIAELQRLKAQQEKKLQALQFQVDHGNHRLEA) adopt a coiled-coil conformation.

This sequence belongs to the TRIM/RBCC family. As to quaternary structure, interacts with NEDD8. Highly expressed in normal gastrointestinal epithelia but that is down-regulated in gastrointestinal carcinomas and chronic inflammatory lesions of the gastrointestinal tract.

It carries out the reaction S-ubiquitinyl-[E2 ubiquitin-conjugating enzyme]-L-cysteine + [acceptor protein]-L-lysine = [E2 ubiquitin-conjugating enzyme]-L-cysteine + N(6)-ubiquitinyl-[acceptor protein]-L-lysine.. E3 ubiquitin-protein ligase that plays a role in the limitation of the innate immune response. Mediates inhibition of the RLR signaling pathway by ubiquitinating RIGI and IFIH1 receptors, leading to their proteasomal degradation. Also promotes the neddylation of IKBKG/NEMO, stabilizing NFKBIA, and thereby inhibiting of NF-kappa-B nuclear translocation and activation. In Homo sapiens (Human), this protein is E3 ubiquitin ligase TRIM40 (TRIM40).